A 430-amino-acid polypeptide reads, in one-letter code: Serine--tRNA ligase (430 aa).

An L-serine-binding site is contributed by 236 to 238 (TAE). 267-269 (RRE) contributes to the ATP binding site. Residue Glu290 participates in L-serine binding. 354–357 (EISS) lines the ATP pocket. L-serine is bound at residue Ser390.

Belongs to the class-II aminoacyl-tRNA synthetase family. Type-1 seryl-tRNA synthetase subfamily. As to quaternary structure, homodimer. The tRNA molecule binds across the dimer.

Its subcellular location is the cytoplasm. It carries out the reaction tRNA(Ser) + L-serine + ATP = L-seryl-tRNA(Ser) + AMP + diphosphate + H(+). It catalyses the reaction tRNA(Sec) + L-serine + ATP = L-seryl-tRNA(Sec) + AMP + diphosphate + H(+). It functions in the pathway aminoacyl-tRNA biosynthesis; selenocysteinyl-tRNA(Sec) biosynthesis; L-seryl-tRNA(Sec) from L-serine and tRNA(Sec): step 1/1. Its function is as follows. Catalyzes the attachment of serine to tRNA(Ser). Is also able to aminoacylate tRNA(Sec) with serine, to form the misacylated tRNA L-seryl-tRNA(Sec), which will be further converted into selenocysteinyl-tRNA(Sec). The chain is Serine--tRNA ligase from Gloeothece citriformis (strain PCC 7424) (Cyanothece sp. (strain PCC 7424)).